The primary structure comprises 138 residues: Transcription antitermination protein NusB (138 aa).

It belongs to the NusB family.

Functionally, involved in transcription antitermination. Required for transcription of ribosomal RNA (rRNA) genes. Binds specifically to the boxA antiterminator sequence of the ribosomal RNA (rrn) operons. The protein is Transcription antitermination protein NusB of Helicobacter pylori (strain P12).